Consider the following 432-residue polypeptide: Pachytene checkpoint protein 2 homolog (432 aa).

An N-acetylmethionine modification is found at M1. ATP is bound at residue 179 to 186 (GPPGTGKT).

The protein belongs to the AAA ATPase family. PCH2 subfamily. In terms of assembly, specifically interacts with the ligand binding domain of the thyroid receptor (TR). This interaction does not require the presence of thyroid hormone for its interaction. Interacts with proteasome subunit PSMA8; to participate in meiosis progression during spermatogenesis. Widely expressed, including in testis.

In terms of biological role, plays a key role in chromosome recombination and chromosome structure development during meiosis. Required at early steps in meiotic recombination that leads to non-crossovers pathways. Also needed for efficient completion of homologous synapsis by influencing crossover distribution along the chromosomes affecting both crossovers and non-crossovers pathways. Also required for development of higher-order chromosome structures and is needed for synaptonemal-complex formation. In males, required for efficient synapsis of the sex chromosomes and for sex body formation. Promotes early steps of the DNA double-strand breaks (DSBs) repair process upstream of the assembly of RAD51 complexes. Required for depletion of HORMAD1 and HORMAD2 from synapsed chromosomes. Plays a role in mitotic spindle assembly checkpoint (SAC) activation. The sequence is that of Pachytene checkpoint protein 2 homolog (Trip13) from Mus musculus (Mouse).